Here is a 211-residue protein sequence, read N- to C-terminus: MQARRIARELALMSIGQMPADRSRLQAKNLEELVLASVRTLREEANESLQRACTELRQGHNRLEASELTAPTVEAARREVAAAIALAEQAINRVGASLELPEFVRLADELQVRAYAFELLGAFVREGDNLDKLLDTCMEGWQVERLTRIDRDILRLALVEMVELKSVPFRVAIDEAVELAKKYSTDTAVRFINGVLRRVVQHLQLEQRPRR.

The protein belongs to the NusB family.

Involved in transcription antitermination. Required for transcription of ribosomal RNA (rRNA) genes. Binds specifically to the boxA antiterminator sequence of the ribosomal RNA (rrn) operons. This Gloeobacter violaceus (strain ATCC 29082 / PCC 7421) protein is Transcription antitermination protein NusB.